The sequence spans 418 residues: UPF0261 protein BRA1168/BS1330_II1159 (418 aa).

Belongs to the UPF0261 family.

In Brucella suis biovar 1 (strain 1330), this protein is UPF0261 protein BRA1168/BS1330_II1159.